Reading from the N-terminus, the 449-residue chain is Tubulin alpha-1C chain (449 aa).

The MREC motif signature appears at 1-4 (MREC). Residue glutamine 11 coordinates GTP. Position 40 is an N6-acetyllysine (lysine 40). Glutamate 71, serine 140, glycine 144, threonine 145, threonine 179, asparagine 206, and asparagine 228 together coordinate GTP. Glutamate 71 lines the Mg(2+) pocket. The active site involves glutamate 254. At tyrosine 282 the chain carries 3'-nitrotyrosine. The residue at position 432 (tyrosine 432) is a Phosphotyrosine. Serine 439 bears the Phosphoserine mark. 3'-nitrotyrosine is present on tyrosine 449.

It belongs to the tubulin family. As to quaternary structure, dimer of alpha and beta chains. A typical microtubule is a hollow water-filled tube with an outer diameter of 25 nm and an inner diameter of 15 nM. Alpha-beta heterodimers associate head-to-tail to form protofilaments running lengthwise along the microtubule wall with the beta-tubulin subunit facing the microtubule plus end conferring a structural polarity. Microtubules usually have 13 protofilaments but different protofilament numbers can be found in some organisms and specialized cells. It depends on Mg(2+) as a cofactor. In terms of processing, some glutamate residues at the C-terminus are polyglycylated, resulting in polyglycine chains on the gamma-carboxyl group. Glycylation is mainly limited to tubulin incorporated into axonemes (cilia and flagella) whereas glutamylation is prevalent in neuronal cells, centrioles, axonemes, and the mitotic spindle. Both modifications can coexist on the same protein on adjacent residues, and lowering polyglycylation levels increases polyglutamylation, and reciprocally. Cilia and flagella glycylation is required for their stability and maintenance. Flagella glycylation controls sperm motility. Some glutamate residues at the C-terminus are polyglutamylated, resulting in polyglutamate chains on the gamma-carboxyl group. Polyglutamylation plays a key role in microtubule severing by spastin (SPAST). SPAST preferentially recognizes and acts on microtubules decorated with short polyglutamate tails: severing activity by SPAST increases as the number of glutamates per tubulin rises from one to eight, but decreases beyond this glutamylation threshold. Glutamylation is also involved in cilia motility. Post-translationally, acetylation of alpha chains at Lys-40 is located inside the microtubule lumen. This modification has been correlated with increased microtubule stability, intracellular transport and ciliary assembly. In terms of processing, methylation of alpha chains at Lys-40 is found in mitotic microtubules and is required for normal mitosis and cytokinesis contributing to genomic stability. Nitration of Tyr-449 is irreversible and interferes with normal dynein intracellular distribution. Post-translationally, undergoes a tyrosination/detyrosination cycle, the cyclic removal and re-addition of a C-terminal tyrosine residue by the enzymes tubulin tyrosine carboxypeptidase (MATCAP1, VASH1 or VASH2) and tubulin tyrosine ligase (TTL), respectively. In terms of processing, tyrosination promotes microtubule interaction with CAP-Gly domain-containing proteins such as CLIP1, CLIP2 and DCTN1. Tyrosination regulates the initiation of dynein-dynactin motility via interaction with DCTN1, which brings the dynein-dynactin complex into contact with microtubules. In neurons, tyrosinated tubulins mediate the initiation of retrograde vesicle transport. Detyrosination is involved in metaphase plate congression by guiding chromosomes during mitosis: detyrosination promotes interaction with CENPE, promoting pole-proximal transport of chromosomes toward the equator. Detyrosination increases microtubules-dependent mechanotransduction in dystrophic cardiac and skeletal muscle. In cardiomyocytes, detyrosinated microtubules are required to resist to contractile compression during contraction: detyrosination promotes association with desmin (DES) at force-generating sarcomeres, leading to buckled microtubules and mechanical resistance to contraction. In terms of tissue distribution, minor alpha-tubulin expressed in all tissues.

It is found in the cytoplasm. It localises to the cytoskeleton. The catalysed reaction is GTP + H2O = GDP + phosphate + H(+). Functionally, tubulin is the major constituent of microtubules, a cylinder consisting of laterally associated linear protofilaments composed of alpha- and beta-tubulin heterodimers. Microtubules grow by the addition of GTP-tubulin dimers to the microtubule end, where a stabilizing cap forms. Below the cap, tubulin dimers are in GDP-bound state, owing to GTPase activity of alpha-tubulin. The sequence is that of Tubulin alpha-1C chain (Tuba1c) from Mus musculus (Mouse).